The primary structure comprises 320 residues: Cytochrome f (320 aa).

Positions 1-35 are cleaved as a signal peptide; sequence MQTRNTFSWIREEITRSISVSLMIYIITWASISGA. Heme is bound by residues tyrosine 36, cysteine 56, cysteine 59, and histidine 60. The helical transmembrane segment at 286–306 threads the bilayer; sequence VQGLLFFLGSVVLAQIFLVLK.

This sequence belongs to the cytochrome f family. The 4 large subunits of the cytochrome b6-f complex are cytochrome b6, subunit IV (17 kDa polypeptide, petD), cytochrome f and the Rieske protein, while the 4 small subunits are PetG, PetL, PetM and PetN. The complex functions as a dimer. Heme is required as a cofactor.

It localises to the plastid. The protein resides in the chloroplast thylakoid membrane. In terms of biological role, component of the cytochrome b6-f complex, which mediates electron transfer between photosystem II (PSII) and photosystem I (PSI), cyclic electron flow around PSI, and state transitions. This is Cytochrome f from Capsella bursa-pastoris (Shepherd's purse).